The sequence spans 87 residues: Cobalt transport protein CbiN (87 aa).

Helical transmembrane passes span 4 to 24 and 58 to 78; these read LLLL…EWAG and MLFS…LGYY.

This sequence belongs to the CbiN family. Forms an energy-coupling factor (ECF) transporter complex composed of an ATP-binding protein (A component, CbiO), a transmembrane protein (T component, CbiQ) and 2 possible substrate-capture proteins (S components, CbiM and CbiN) of unknown stoichimetry.

It is found in the cell membrane. It functions in the pathway cofactor biosynthesis; adenosylcobalamin biosynthesis. In terms of biological role, part of the energy-coupling factor (ECF) transporter complex CbiMNOQ involved in cobalt import. The chain is Cobalt transport protein CbiN from Archaeoglobus fulgidus (strain ATCC 49558 / DSM 4304 / JCM 9628 / NBRC 100126 / VC-16).